We begin with the raw amino-acid sequence, 368 residues long: ATP-dependent (S)-NAD(P)H-hydrate dehydratase (368 aa).

One can recognise a YjeF C-terminal domain in the interval 13–357; the sequence is LFKKVRKIVP…DEVHESFLEL (345 aa). (6S)-NADPHX-binding positions include Gly125 and 178–184; that span reads NVNEFSR. ATP contacts are provided by residues 231–235 and 250–259; these read KGPHD and GGLKRSGGQG. Residue Asp260 participates in (6S)-NADPHX binding.

Belongs to the NnrD/CARKD family. It depends on Mg(2+) as a cofactor.

It is found in the cytoplasm. It carries out the reaction (6S)-NADHX + ATP = ADP + phosphate + NADH + H(+). The enzyme catalyses (6S)-NADPHX + ATP = ADP + phosphate + NADPH + H(+). Functionally, catalyzes the dehydration of the S-form of NAD(P)HX at the expense of ATP, which is converted to ADP. Together with NAD(P)HX epimerase, which catalyzes the epimerization of the S- and R-forms, the enzyme allows the repair of both epimers of NAD(P)HX, a damaged form of NAD(P)H that is a result of enzymatic or heat-dependent hydration. The protein is ATP-dependent (S)-NAD(P)H-hydrate dehydratase of Aspergillus fumigatus (strain ATCC MYA-4609 / CBS 101355 / FGSC A1100 / Af293) (Neosartorya fumigata).